The following is a 246-amino-acid chain: MMKSQVASLLGLTLAILFFSGAHAAKITFTNNCPNTVWPGTLTGDQKPQLSLTGFELASKASRSVDAPSPWSGRFWGRTRCSTDAAGKFTCETADCGSGQVACNGAGAVPPATLVEITIAANGGQDYYDVSLVDGFNLPMSVAPQGGTGECKPSSCPANVNKVCPAPLQVKAADGSVISCKSACLAFGDSKYCCTPPNNTPETCPPTEYSEIFEKQCPQAYSYAYDDKNSTFTCSGGPDYVITFCP.

Residues 1-24 (MMKSQVASLLGLTLAILFFSGAHA) form the signal peptide. 8 disulfide bridges follow: Cys33–Cys245, Cys81–Cys91, Cys96–Cys103, Cys151–Cys234, Cys156–Cys217, Cys164–Cys180, Cys184–Cys193, and Cys194–Cys204.

The protein belongs to the thaumatin family.

The protein localises to the secreted. The polypeptide is Thaumatin-like protein 1a (TL1) (Malus domestica (Apple)).